Here is a 141-residue protein sequence, read N- to C-terminus: ATP synthase F(0) complex subunit C2, mitochondrial (141 aa).

The transit peptide at 1–66 (MFSCFKFIST…RNFQTSAISR (66 aa)) directs the protein to the mitochondrion. Residues 82 to 102 (VGVAGSGAGIGTVFGSLIIGY) form a helical membrane-spanning segment. Lysine 109 carries the post-translational modification N6,N6,N6-trimethyllysine. The helical transmembrane segment at 117–137 (ILGFALSEAMGLFCLMVAFLI) threads the bilayer.

This sequence belongs to the ATPase C chain family. F-type ATPases have 2 components, CF(1) - the catalytic core - and CF(0) - the membrane proton channel. CF(1) has five subunits: alpha(3), beta(3), gamma(1), delta(1), epsilon(1). CF(0) has three main subunits: a, b and c. Interacts with DNAJC30; interaction is direct. Post-translationally, trimethylated by ATPSCKMT at Lys-109. Methylation is required for proper incorporation of the C subunit into the ATP synthase complex and mitochondrial respiration.

Its subcellular location is the mitochondrion membrane. Mitochondrial membrane ATP synthase (F(1)F(0) ATP synthase or Complex V) produces ATP from ADP in the presence of a proton gradient across the membrane which is generated by electron transport complexes of the respiratory chain. F-type ATPases consist of two structural domains, F(1) - containing the extramembraneous catalytic core and F(0) - containing the membrane proton channel, linked together by a central stalk and a peripheral stalk. During catalysis, ATP synthesis in the catalytic domain of F(1) is coupled via a rotary mechanism of the central stalk subunits to proton translocation. Part of the complex F(0) domain. A homomeric c-ring of probably 10 subunits is part of the complex rotary element. The sequence is that of ATP synthase F(0) complex subunit C2, mitochondrial from Pongo abelii (Sumatran orangutan).